We begin with the raw amino-acid sequence, 449 residues long: Methionine aminopeptidase 2-2 (449 aa).

The segment at 1 to 91 is disordered; that stretch reads MAAQAAPELA…PRIPLTTLFP (91 aa). Positions 15 to 28 are enriched in polar residues; it reads NKNTGSAEASTVPA. The span at 34 to 50 shows a compositional bias: acidic residues; it reads DDAENEGDSDDDRDDEQ. The span at 61-75 shows a compositional bias: basic residues; the sequence is KKKKKKRPKKKKKTA. His199 lines the substrate pocket. The a divalent metal cation site is built by Asp219, Asp230, and His299. His307 contacts substrate. Glu335 and Glu430 together coordinate a divalent metal cation.

It belongs to the peptidase M24A family. Methionine aminopeptidase eukaryotic type 2 subfamily. Co(2+) serves as cofactor. It depends on Zn(2+) as a cofactor. Requires Mn(2+) as cofactor. Fe(2+) is required as a cofactor.

It localises to the cytoplasm. It carries out the reaction Release of N-terminal amino acids, preferentially methionine, from peptides and arylamides.. Its function is as follows. Cotranslationally removes the N-terminal methionine from nascent proteins. The N-terminal methionine is often cleaved when the second residue in the primary sequence is small and uncharged (Met-Ala-, Cys, Gly, Pro, Ser, Thr, or Val). The sequence is that of Methionine aminopeptidase 2-2 from Arthroderma gypseum (strain ATCC MYA-4604 / CBS 118893) (Microsporum gypseum).